Reading from the N-terminus, the 2008-residue chain is Histone-lysine N-methyltransferase SETD1B (2008 aa).

A compositionally biased stretch (basic and acidic residues) spans 1-20; it reads MSFREIKAGEKAKHPEDHGK. A disordered region spans residues 1–42; that stretch reads MSFREIKAGEKAKHPEDHGKKQSSSWINGMENSTQASTSVEK. A compositionally biased stretch (polar residues) spans 22–39; that stretch reads QSSSWINGMENSTQASTS. The 89-residue stretch at 111 to 199 folds into the RRM domain; the sequence is DEFYVGPVPP…NIIHVELDTK (89 aa). Disordered stretches follow at residues 249-390, 402-652, 682-725, 950-1172, 1309-1328, 1345-1461, 1563-1600, 1674-1712, and 1814-1842; these read NLSS…SSYK, FPQS…APIT, PPGF…PPLP, RKEP…DKRE, TKLP…PGRE, VPSS…FTPT, VGAS…MYSG, KEEE…PQFR, and EEPP…RRSE. Over residues 251 to 264 the composition is skewed to low complexity; the sequence is SSVGSSVTPNSSTP. Composition is skewed to polar residues over residues 265 to 293, 301 to 315, 360 to 381, 405 to 414, and 456 to 491; these read FSHD…QGTP, PFSQ…QTTP, HQFS…TPPL, SEEQPFAQTS, and DSNS…QHNS. Over residues 492 to 521 the composition is skewed to basic and acidic residues; that stretch reads LDSRIEMLLKEQRTKLPFLNEHDSDNEVRM. Positions 524–537 are enriched in low complexity; it reads SPISSSSSQLSPIP. Composition is skewed to polar residues over residues 540 to 560 and 582 to 604; these read GSNS…SSTG and ASLN…QLNR. Basic and acidic residues-rich tracts occupy residues 606-617 and 626-636; these read SKVETLEVKEMV and EKMDESQHSSG. A compositionally biased stretch (acidic residues) spans 637 to 646; sequence EDMEISDDEM. Residues 979–997 are compositionally biased toward basic and acidic residues; the sequence is ERDRDASDTTSDLSKKDAE. Residues 1011-1020 show a composition bias toward acidic residues; the sequence is LDSEGEEGDE. A compositionally biased stretch (basic and acidic residues) spans 1021–1031; the sequence is TSGKEEESSSE. Composition is skewed to acidic residues over residues 1050 to 1094 and 1105 to 1149; these read EEEE…EEDA and ESSD…EDQD. A compositionally biased stretch (basic and acidic residues) spans 1150–1172; that stretch reads REAMVAETEHEPASHELPDDKRE. Low complexity predominate over residues 1345 to 1356; that stretch reads VPSSTVPLPSTP. Positions 1378–1392 are enriched in basic and acidic residues; that stretch reads SIEEEIPRTPGRDIL. Low complexity predominate over residues 1418–1427; it reads LTGSSLTLSS. Composition is skewed to basic residues over residues 1577–1587 and 1681–1690; these read LPKRRPGRPRR and KPKRQWRRQK. Positions 1699-1710 are enriched in pro residues; the sequence is IPSPEYSPPQPQ. The RxxxRR motif motif lies at 1840-1845; that stretch reads RSEQRR. Residues 1869 to 1986 enclose the SET domain; sequence KKLKFCKSHI…VNEEITYDYK (118 aa). An S-adenosyl-L-methionine-binding site is contributed by tyrosine 1985. The region spanning 1992–2008 is the Post-SET domain; it reads VKIPCLCGSENCRGTLN.

Belongs to the class V-like SAM-binding methyltransferase superfamily. As to quaternary structure, component of the SET1B/COMPASS complex.

The protein localises to the nucleus speckle. It localises to the chromosome. The enzyme catalyses L-lysyl(4)-[histone H3] + 3 S-adenosyl-L-methionine = N(6),N(6),N(6)-trimethyl-L-lysyl(4)-[histone H3] + 3 S-adenosyl-L-homocysteine + 3 H(+). Its function is as follows. Histone methyltransferase that specifically methylates 'Lys-4' of histone H3, when part of the SET1 histone methyltransferase (HMT) complex, but not if the neighboring 'Lys-9' residue is already methylated. H3 'Lys-4' methylation represents a specific tag for epigenetic transcriptional activation. In Gallus gallus (Chicken), this protein is Histone-lysine N-methyltransferase SETD1B (SETD1B).